The chain runs to 421 residues: Acetate kinase (421 aa).

N7 is a Mg(2+) binding site. K14 contacts ATP. R91 is a binding site for substrate. The active-site Proton donor/acceptor is D148. ATP contacts are provided by residues 208-212 (HIGNG) and 283-285 (DRR). Residue E387 participates in Mg(2+) binding.

It belongs to the acetokinase family. As to quaternary structure, homodimer. The cofactor is Mg(2+). Mn(2+) is required as a cofactor.

The protein resides in the cytoplasm. It catalyses the reaction acetate + ATP = acetyl phosphate + ADP. It functions in the pathway metabolic intermediate biosynthesis; acetyl-CoA biosynthesis; acetyl-CoA from acetate: step 1/2. In terms of biological role, catalyzes the formation of acetyl phosphate from acetate and ATP. Can also catalyze the reverse reaction. The protein is Acetate kinase of Trichlorobacter lovleyi (strain ATCC BAA-1151 / DSM 17278 / SZ) (Geobacter lovleyi).